A 314-amino-acid chain; its full sequence is METQVVIMSGPKAISTGIAGLTDPGPGDLVVDIAYSGISTGTEKLFWLGTMPPFPGMGYPLVPGYESFGEVVQAAPDTGFRPGDHVFIPGANCFTGGLRGLFGGASKRLVTAASRVCRLDPAIGPEGALLALAATARHALAGFDNALPDLIVGHGTLGRLLARLTLAAGGKPPMVWETNPARRTGAVGYEVLDPEADPRRDYKAIYDASGAPGLIDQLVGRLGKGGELVLCGFYTVPVSFAFVPAFMKEMRLRIAAEWQPADLSATRALIESGALSLDGLITHRRPAAEAAEAYQTAFEDPDCLKMILDWKDAK.

It functions in the pathway porphyrin-containing compound metabolism; bacteriochlorophyll biosynthesis (light-independent). This protein catalyzes the penultimate step in bacteriochlorophyll a biosynthesis. This is 2-desacetyl-2-hydroxyethyl bacteriochlorophyllide A dehydrogenase (bchC) from Rhodobacter capsulatus (strain ATCC BAA-309 / NBRC 16581 / SB1003).